The sequence spans 199 residues: dITP/XTP pyrophosphatase (199 aa).

Position 7–12 (7–12) interacts with substrate; it reads TTNLHK. 2 residues coordinate Mg(2+): Glu41 and Asp70. Asp70 (proton acceptor) is an active-site residue. Residues Ser71, 154–157, Lys177, and 182–183 each bind substrate; these read FGYD and HR.

Belongs to the HAM1 NTPase family. In terms of assembly, homodimer. Mg(2+) is required as a cofactor.

The enzyme catalyses XTP + H2O = XMP + diphosphate + H(+). It catalyses the reaction dITP + H2O = dIMP + diphosphate + H(+). It carries out the reaction ITP + H2O = IMP + diphosphate + H(+). Pyrophosphatase that catalyzes the hydrolysis of nucleoside triphosphates to their monophosphate derivatives, with a high preference for the non-canonical purine nucleotides XTP (xanthosine triphosphate), dITP (deoxyinosine triphosphate) and ITP. Seems to function as a house-cleaning enzyme that removes non-canonical purine nucleotides from the nucleotide pool, thus preventing their incorporation into DNA/RNA and avoiding chromosomal lesions. The sequence is that of dITP/XTP pyrophosphatase from Protochlamydia amoebophila (strain UWE25).